The sequence spans 343 residues: Fc receptor-like protein 1 (343 aa).

Residues 1-16 (MLPWLLLLICALPCEP) form the signal peptide. 2 consecutive Ig-like C2-type domains span residues 17–109 (AGIS…VSIH) and 117–200 (PVLT…EVVA). The Extracellular portion of the chain corresponds to 17-219 (AGISDVSLKT…PTENGISHLS (203 aa)). Asparagine 51 is a glycosylation site (N-linked (GlcNAc...) asparagine). Cysteine 138 and cysteine 185 form a disulfide bridge. Asparagine 202 carries N-linked (GlcNAc...) asparagine glycosylation. A helical membrane pass occupies residues 220 to 240 (LGLTGWLLGCLSPITMALIFC). Over 241 to 343 (YWLKRKIGRQ…IAHMDYEDAM (103 aa)) the chain is Cytoplasmic. A disordered region spans residues 251 to 278 (SEDPVRSPPQTVLQGSTYPKSPDSRQPE). Residues 258-269 (PPQTVLQGSTYP) are compositionally biased toward polar residues. Short sequence motifs (ITIM motif) lie at residues 266–271 (STYPKS), 279–284 (PLYENV), and 291–296 (EVYSLV). Position 281 is a phosphotyrosine (tyrosine 281). Tyrosine 297 carries the post-translational modification Phosphotyrosine. 2 short sequence motifs (ITIM motif) span residues 325–330 (GLYSKP) and 337–342 (MDYEDA).

Interacts with ABL1. Interacts with GRB2 and SOS1. Interacts with SHIP-1/INPP5D. Post-translationally, phosphorylated on C-terminal region upon BCR ligation leading to recruitment of ABL1. As to expression, widely expressed. Expressed in B-cells at the various stages of differentiation.

It localises to the cell membrane. May function as an activating coreceptor in B-cells. May function in B-cells activation and differentiation. This chain is Fc receptor-like protein 1 (Fcrl1), found in Mus musculus (Mouse).